Reading from the N-terminus, the 326-residue chain is Acetyl-coenzyme A carboxylase carboxyl transferase subunit alpha (326 aa).

The CoA carboxyltransferase C-terminal domain maps to 46–300; the sequence is EIEARAAELR…KEALLRHLDE (255 aa).

The protein belongs to the AccA family. In terms of assembly, acetyl-CoA carboxylase is a heterohexamer composed of biotin carboxyl carrier protein (AccB), biotin carboxylase (AccC) and two subunits each of ACCase subunit alpha (AccA) and ACCase subunit beta (AccD).

The protein localises to the cytoplasm. It catalyses the reaction N(6)-carboxybiotinyl-L-lysyl-[protein] + acetyl-CoA = N(6)-biotinyl-L-lysyl-[protein] + malonyl-CoA. Its pathway is lipid metabolism; malonyl-CoA biosynthesis; malonyl-CoA from acetyl-CoA: step 1/1. Functionally, component of the acetyl coenzyme A carboxylase (ACC) complex. First, biotin carboxylase catalyzes the carboxylation of biotin on its carrier protein (BCCP) and then the CO(2) group is transferred by the carboxyltransferase to acetyl-CoA to form malonyl-CoA. This is Acetyl-coenzyme A carboxylase carboxyl transferase subunit alpha from Gloeobacter violaceus (strain ATCC 29082 / PCC 7421).